Reading from the N-terminus, the 124-residue chain is Vitelline membrane protein Vm32E (124 aa).

The N-terminal stretch at 1–19 (MKTVAFLAVVVLFAAFACA) is a signal peptide. The VM domain maps to 42 to 81 (SVPAPPCPKNYLFSCQPNLVPAPCAQQAAPAAYGSAGAYT).

The protein belongs to the vitelline membrane family.

It is found in the secreted. Its function is as follows. Major early eggshell protein. The sequence is that of Vitelline membrane protein Vm32E from Drosophila pseudoobscura pseudoobscura (Fruit fly).